The sequence spans 361 residues: MGNIHIQTKSKEYDVHVGKEALSHLTMIVQNMQPAVSNVMIISDEAVASLHLQTVIDALQVEQDVFSFVVPSGEKEKSFENFYAAHTSALENKLDRNSLILALGGGMIGDLAGFVAASFMRGIRFVQVPTTLLAHDSAVGGKVAINHPLGKNMIGAFHQPEAVVYHTPFLQSLPKKEWRSGYAEVIKHALIGDVELYHWLKEEVQTLADLRDEKLIHILTKAIPVKANVVSQDETEKGVRAHLNFGHTLGHALEKELGYGNITHGDGVAVGMLFAIFLSEQVYKVNLAYEDMKQWFLKYGYPKMPRDLNVERLVQLMKQDKKANAGAIHMVLMQEYGVVNVVSISDETVHIALEAFQKDMV.

NAD(+) is bound by residues 72–77 (SGEKEK), 130–131 (TT), Lys142, and Lys151. Zn(2+)-binding residues include Glu184, His247, and His264.

The protein belongs to the sugar phosphate cyclases superfamily. Dehydroquinate synthase family. Co(2+) is required as a cofactor. Requires Zn(2+) as cofactor. The cofactor is NAD(+).

It is found in the cytoplasm. The enzyme catalyses 7-phospho-2-dehydro-3-deoxy-D-arabino-heptonate = 3-dehydroquinate + phosphate. It participates in metabolic intermediate biosynthesis; chorismate biosynthesis; chorismate from D-erythrose 4-phosphate and phosphoenolpyruvate: step 2/7. In terms of biological role, catalyzes the conversion of 3-deoxy-D-arabino-heptulosonate 7-phosphate (DAHP) to dehydroquinate (DHQ). The protein is 3-dehydroquinate synthase of Bacillus cereus (strain G9842).